The chain runs to 472 residues: MAGDEAGVTLGQPHLSRQDLATLDVTKLTPLSPEVISRQATINIGTIGHVAHGKSTVVKAISGVHTVRFKNELERNITIKLGYANAKIYKLDDPSCSRPECYRSCGSSTPDEFPTDIPGTKGNFKLVRHVSFVDCPGHDILMATMLNGAAVMDAALLLIAGNESCPQPQTSEHLAAIEIMKLKHILILQNKIDLVKESQAKEQYEQILAFVQGTVAEGAPIIPISAQLKYSIEVVCEYIVKKIPVPLRDFTSEPRLIVIRSFDVNKPGCEVDDLKGGVAGGSILKGVLKVGQEIEVRPGIVSKDSEGKLMCKPIFSKIVSLFAEHNDLQYAAPGGLIGVGTKIDPTLCRADRMVGQVLGAVGALPEIFTELEISYFLLRRLLGVRTEGDKKAAKVQKLSKNEVLMVNIGSLSTGGRVSAVKADLGKIVLTNPVCTEVGEKIALSRRVEKHWRLIGWGQIRRGVTIKPTVDDD.

Ala2 carries the post-translational modification N-acetylalanine; partial. The 209-residue stretch at 39–247 (QATINIGTIG…YIVKKIPVPL (209 aa)) folds into the tr-type G domain. The G1 stretch occupies residues 48–55 (GHVAHGKS). 51 to 56 (AHGKST) is a GTP binding site. The segment at 76-80 (NITIK) is G2. The tract at residues 134–137 (DCPG) is G3. GTP contacts are provided by residues 190 to 193 (NKID) and 225 to 227 (SAQ). A G4 region spans residues 190 to 193 (NKID). The interval 225 to 227 (SAQ) is G5. The interacts with CDC123 stretch occupies residues 457–469 (GQIRRGVTIKPTV).

The protein belongs to the TRAFAC class translation factor GTPase superfamily. Classic translation factor GTPase family. EIF2G subfamily. Eukaryotic translation initiation factor 2 eIF2 is a heterotrimeric complex composed of an alpha (EIF2S1), a beta (EIF2S2) and a gamma (EIF2S3) chain. eIF2 is member of the 43S pre-initiation complex (43S PIC).

It is found in the cytoplasm. The protein localises to the cytosol. It carries out the reaction GTP + H2O = GDP + phosphate + H(+). Its function is as follows. Member of the eIF2 complex that functions in the early steps of protein synthesis by forming a ternary complex with GTP and initiator tRNA. This complex binds to a 40S ribosomal subunit, followed by mRNA binding to form the 43S pre-initiation complex (43S PIC). Junction of the 60S ribosomal subunit to form the 80S initiation complex is preceded by hydrolysis of the GTP bound to eIF2 and release of an eIF2-GDP binary complex. In order for eIF2 to recycle and catalyze another round of initiation, the GDP bound to eIF2 must exchange with GTP by way of a reaction catalyzed by eIF-2B. The chain is Eukaryotic translation initiation factor 2 subunit 3 (EIF2S3) from Gallus gallus (Chicken).